Reading from the N-terminus, the 165-residue chain is Interferon gamma (165 aa).

The N-terminal stretch at 1–23 (MKYTSYILAFQLCIVLGSLGCYC) is a signal peptide. At Q24 the chain carries Pyrrolidone carboxylic acid. N-linked (GlcNAc...) asparagine glycosylation is found at N48 and N120.

The protein belongs to the type II (or gamma) interferon family. In terms of assembly, homodimer. Interacts with IFNGR1 (via extracellular domain); this interaction promotes IFNGR1 dimerization. Released primarily from activated T lymphocytes.

It localises to the secreted. Functionally, type II interferon produced by immune cells such as T-cells and NK cells that plays crucial roles in antimicrobial, antiviral, and antitumor responses by activating effector immune cells and enhancing antigen presentation. Primarily signals through the JAK-STAT pathway after interaction with its receptor IFNGR1 to affect gene regulation. Upon IFNG binding, IFNGR1 intracellular domain opens out to allow association of downstream signaling components JAK2, JAK1 and STAT1, leading to STAT1 activation, nuclear translocation and transcription of IFNG-regulated genes. Many of the induced genes are transcription factors such as IRF1 that are able to further drive regulation of a next wave of transcription. Plays a role in class I antigen presentation pathway by inducing a replacement of catalytic proteasome subunits with immunoproteasome subunits. In turn, increases the quantity, quality, and repertoire of peptides for class I MHC loading. Increases the efficiency of peptide generation also by inducing the expression of activator PA28 that associates with the proteasome and alters its proteolytic cleavage preference. Up-regulates as well MHC II complexes on the cell surface by promoting expression of several key molecules such as cathepsins B/CTSB, H/CTSH, and L/CTSL. Participates in the regulation of hematopoietic stem cells during development and under homeostatic conditions by affecting their development, quiescence, and differentiation. The polypeptide is Interferon gamma (IFNG) (Cercocebus atys (Sooty mangabey)).